We begin with the raw amino-acid sequence, 343 residues long: tRNA N6-adenosine threonylcarbamoyltransferase (343 aa).

Residues His120 and His124 each contribute to the Fe cation site. Substrate contacts are provided by residues 142-146 (VVSGG), Asp175, Gly188, Asp192, and Asn281. Asp309 contacts Fe cation.

It belongs to the KAE1 / TsaD family. Fe(2+) serves as cofactor.

The protein resides in the cytoplasm. The catalysed reaction is L-threonylcarbamoyladenylate + adenosine(37) in tRNA = N(6)-L-threonylcarbamoyladenosine(37) in tRNA + AMP + H(+). Functionally, required for the formation of a threonylcarbamoyl group on adenosine at position 37 (t(6)A37) in tRNAs that read codons beginning with adenine. Is involved in the transfer of the threonylcarbamoyl moiety of threonylcarbamoyl-AMP (TC-AMP) to the N6 group of A37, together with TsaE and TsaB. TsaD likely plays a direct catalytic role in this reaction. This chain is tRNA N6-adenosine threonylcarbamoyltransferase, found in Halalkalibacterium halodurans (strain ATCC BAA-125 / DSM 18197 / FERM 7344 / JCM 9153 / C-125) (Bacillus halodurans).